The following is a 122-amino-acid chain: Ribosomal protein eL22-like (122 aa).

A phosphoserine mark is found at Ser112, Ser118, and Ser120.

Belongs to the eukaryotic ribosomal protein eL22 family.

The chain is Ribosomal protein eL22-like (RPL22L1) from Bos taurus (Bovine).